The sequence spans 190 residues: Protein LZIC (190 aa).

The stretch at 2–63 forms a coiled coil; that stretch reads ASRGKTETSK…SEFNDSLKKI (62 aa).

Belongs to the CTNNBIP1 family. As to quaternary structure, does not interact with CTNNB1.

The sequence is that of Protein LZIC (Lzic) from Mus musculus (Mouse).